We begin with the raw amino-acid sequence, 84 residues long: MAERVAAFLKNVWAKEPVLVASFAIAGLAVILPTLSPYTKYSLMINRATPYNYPVPLRDDGNMPDVPSHPQDPQGPSLEWLKRL.

The residue at position 2 (A2) is an N-acetylalanine. Residues V18–Y38 form a helical membrane-spanning segment. Positions P56 to L84 are disordered.

It belongs to the complex I NDUFA3 subunit family. As to quaternary structure, complex I is composed of 45 different subunits.

It localises to the mitochondrion inner membrane. Functionally, accessory subunit of the mitochondrial membrane respiratory chain NADH dehydrogenase (Complex I), that is believed not to be involved in catalysis. Complex I functions in the transfer of electrons from NADH to the respiratory chain. The immediate electron acceptor for the enzyme is believed to be ubiquinone. The sequence is that of NADH dehydrogenase [ubiquinone] 1 alpha subcomplex subunit 3 (NDUFA3) from Bos taurus (Bovine).